Here is a 449-residue protein sequence, read N- to C-terminus: NADH-quinone oxidoreductase subunit D (449 aa).

Belongs to the complex I 49 kDa subunit family. As to quaternary structure, NDH-1 is composed of 14 different subunits. Subunits NuoB, C, D, E, F, and G constitute the peripheral sector of the complex.

The protein resides in the cell membrane. It catalyses the reaction a quinone + NADH + 5 H(+)(in) = a quinol + NAD(+) + 4 H(+)(out). In terms of biological role, NDH-1 shuttles electrons from NADH, via FMN and iron-sulfur (Fe-S) centers, to quinones in the respiratory chain. The immediate electron acceptor for the enzyme in this species is believed to be a menaquinone. Couples the redox reaction to proton translocation (for every two electrons transferred, four hydrogen ions are translocated across the cytoplasmic membrane), and thus conserves the redox energy in a proton gradient. In Saccharopolyspora erythraea (strain ATCC 11635 / DSM 40517 / JCM 4748 / NBRC 13426 / NCIMB 8594 / NRRL 2338), this protein is NADH-quinone oxidoreductase subunit D.